The following is a 141-amino-acid chain: MSIVIGADAAGLRLKEVVKDFLEKENFHLVDVTAEGQDFVDVTLAVAAEVNKEEQNLGIVIDAYGAGPFIVATKIKGMVAAEVSDERSAYMTRSHNNSRMITMGAQLVGDELAKNIAKGFVNGKYDGGRHQIRVDMLNKMG.

Belongs to the LacAB/RpiB family. As to quaternary structure, heteromultimeric protein consisting of LacA and LacB.

The catalysed reaction is aldehydo-D-galactose 6-phosphate = keto-D-tagatose 6-phosphate. Its pathway is carbohydrate metabolism; D-galactose 6-phosphate degradation; D-tagatose 6-phosphate from D-galactose 6-phosphate: step 1/1. This is Galactose-6-phosphate isomerase subunit LacA from Streptococcus pneumoniae (strain Taiwan19F-14).